A 370-amino-acid chain; its full sequence is Notoamide biosynthesis cluster protein J (370 aa).

A signal peptide spans 1–22; it reads MRIMSIMLHLLATILLSSAVSA. Residues Asn159, Asn167, Asn192, Asn235, Asn282, Asn340, and Asn346 are each glycosylated (N-linked (GlcNAc...) asparagine).

Part of the gene cluster that mediates the biosynthesis of notoamide, a fungal indole alkaloid that belongs to a family of natural products containing a characteristic bicyclo[2.2.2]diazaoctane core. The first step of notoamide biosynthesis involves coupling of L-proline and L-tryptophan by the bimodular NRPS notE, to produce cyclo-L-tryptophan-L-proline called brevianamide F. The reverse prenyltransferase notF then acts as a deoxybrevianamide E synthase and converts brevianamide F to deoxybrevianamide E via reverse prenylation at C-2 of the indole ring leading to the bicyclo[2.2.2]diazaoctane core. Deoxybrevianamide E is further hydroxylated at C-6 of the indole ring, likely catalyzed by the cytochrome P450 monooxygenase notG, to yield 6-hydroxy-deoxybrevianamide E. 6-hydroxy-deoxybrevianamide E is a specific substrate of the prenyltransferase notC for normal prenylation at C-7 to produce 6-hydroxy-7-prenyl-deoxybrevianamide, also called notoamide S. As the proposed pivotal branching point in notoamide biosynthesis, notoamide S can be diverted to notoamide E through an oxidative pyran ring closure putatively catalyzed by either notH cytochrome P450 monooxygenase or the notD FAD-linked oxidoreductase. This step would be followed by an indole 2,3-epoxidation-initiated pinacol-like rearrangement catalyzed by the notB FAD-dependent monooxygenase leading to the formation of notoamide C and notoamide D. On the other hand notoamide S is converted to notoamide T by notH (or notD), a bifunctional oxidase that also functions as the intramolecular Diels-Alderase responsible for generation of (+)-notoamide T. To generate antipodal (-)-notoaminide T, notH' (or notD') in Aspergillus versicolor is expected to catalyze a Diels-Alder reaction leading to the opposite stereochemistry. The remaining oxidoreductase notD (or notH) likely catalyzes the oxidative pyran ring formation to yield (+)-stephacidin A. The FAD-dependent monooxygenase notI is highly similar to notB and is predicted to catalyze a similar conversion from (+)-stephacidin A to (-)-notoamide B via the 2,3-epoxidation of (+)-stephacidin A followed by a pinacol-type rearrangement. Finally, it remains unclear which enzyme could be responsible for the final hydroxylation steps leading to notoamide A and sclerotiamide. The function of notJ in the notoamide biosynthesis has not been determined yet. The protein is Notoamide biosynthesis cluster protein J of Aspergillus sp. (strain MF297-2).